The sequence spans 384 residues: MAKHLFTSESVSEGHPDKIADQISDAVLDAILEQDPKARVACETYVKTGMVLVGGEITTSAWVDIEEITRQTVRDIGYVHSDMGFDANSCAVLSAIGKQSPDINQGVDRTDPLEQGAGDQGLMFGYATNETDVLMPAPVTYAHRLVQRQSEVRKSGALPWLRPDAKSQITFQYDDGKIVGIDAVVLSTQHAEDISQKELQEAVMEEIIKPVLPTEWINASTKYHINPTGRFVIGGPMGDCGLTGRKIIVDTYGGMARHGGGAFSGKDPSKVDRSAAYAARYVAKNIVAAGLADRCEIQVSYAIGVAEPTSIMVETFGTEKISTETLTLLVREFFDLRPHGLIQMLDLLHPIYRETAAYGHFGREHFPWEKTDKAAQLREAAGLK.

His-15 contacts ATP. Asp-17 is a binding site for Mg(2+). Glu-43 is a K(+) binding site. L-methionine contacts are provided by Glu-56 and Gln-99. Residues 99 to 109 (QSPDINQGVDR) form a flexible loop region. ATP contacts are provided by residues 164-166 (DAK), 230-231 (RF), Asp-239, 245-246 (RK), Ala-262, and Lys-266. Asp-239 is a binding site for L-methionine. Lys-270 serves as a coordination point for L-methionine.

It belongs to the AdoMet synthase family. In terms of assembly, homotetramer; dimer of dimers. The cofactor is Mg(2+). K(+) serves as cofactor.

It localises to the cytoplasm. It catalyses the reaction L-methionine + ATP + H2O = S-adenosyl-L-methionine + phosphate + diphosphate. The protein operates within amino-acid biosynthesis; S-adenosyl-L-methionine biosynthesis; S-adenosyl-L-methionine from L-methionine: step 1/1. Functionally, catalyzes the formation of S-adenosylmethionine (AdoMet) from methionine and ATP. The overall synthetic reaction is composed of two sequential steps, AdoMet formation and the subsequent tripolyphosphate hydrolysis which occurs prior to release of AdoMet from the enzyme. In Erwinia tasmaniensis (strain DSM 17950 / CFBP 7177 / CIP 109463 / NCPPB 4357 / Et1/99), this protein is S-adenosylmethionine synthase.